Consider the following 481-residue polypeptide: Bifunctional protein HldE (481 aa).

The interval Met-1–Thr-318 is ribokinase. Residue Asn-195 to Glu-198 coordinates ATP. Asp-264 is a catalytic residue. The tract at residues Met-344–Val-481 is cytidylyltransferase.

In the N-terminal section; belongs to the carbohydrate kinase PfkB family. This sequence in the C-terminal section; belongs to the cytidylyltransferase family. As to quaternary structure, homodimer.

The enzyme catalyses D-glycero-beta-D-manno-heptose 7-phosphate + ATP = D-glycero-beta-D-manno-heptose 1,7-bisphosphate + ADP + H(+). It carries out the reaction D-glycero-beta-D-manno-heptose 1-phosphate + ATP + H(+) = ADP-D-glycero-beta-D-manno-heptose + diphosphate. It functions in the pathway nucleotide-sugar biosynthesis; ADP-L-glycero-beta-D-manno-heptose biosynthesis; ADP-L-glycero-beta-D-manno-heptose from D-glycero-beta-D-manno-heptose 7-phosphate: step 1/4. Its pathway is nucleotide-sugar biosynthesis; ADP-L-glycero-beta-D-manno-heptose biosynthesis; ADP-L-glycero-beta-D-manno-heptose from D-glycero-beta-D-manno-heptose 7-phosphate: step 3/4. Its function is as follows. Catalyzes the phosphorylation of D-glycero-D-manno-heptose 7-phosphate at the C-1 position to selectively form D-glycero-beta-D-manno-heptose-1,7-bisphosphate. Catalyzes the ADP transfer from ATP to D-glycero-beta-D-manno-heptose 1-phosphate, yielding ADP-D-glycero-beta-D-manno-heptose. In Sodalis glossinidius (strain morsitans), this protein is Bifunctional protein HldE.